The following is a 2028-amino-acid chain: Phosphatidylinositol 4-kinase alpha 1 (2028 aa).

The tract at residues 184–241 (PASPKEQRQQNSANSETDTSSSQGSPISTNRYPSGKTEMASPGDEVASHGSNLSSKSS) is disordered. Positions 192–215 (QQNSANSETDTSSSQGSPISTNRY) are enriched in polar residues. Low complexity predominate over residues 231–241 (SHGSNLSSKSS). The PIK helical domain occupies 1483 to 1659 (TEYAKTAFSV…NAAFQEILPQ (177 aa)). The interval 1660–1773 (VRQHIIDGFS…VKPQACIFKV (114 aa)) is pleckstrin homology (PH) domain conferring phosphoinositide binding specificity. One can recognise a PI3K/PI4K catalytic domain in the interval 1734–2012 (VDSGIPLQSA…VCTDAYNKWT (279 aa)). Residues 1740–1746 (LQSAAKV) form a G-loop region. A catalytic loop region spans residues 1876–1884 (QPKDRHNGN). The tract at residues 1895–1920 (HIDFGFILETSPGGNMRFESAHFKLS) is activation loop.

It belongs to the PI3/PI4-kinase family. Type III PI4K subfamily. As to quaternary structure, interacts in vitro with actin filaments via its PH domain. Present in leaves and inflorescences.

Its subcellular location is the membrane. It is found in the cytoplasm. The protein localises to the perinuclear region. The enzyme catalyses a 1,2-diacyl-sn-glycero-3-phospho-(1D-myo-inositol) + ATP = a 1,2-diacyl-sn-glycero-3-phospho-(1D-myo-inositol 4-phosphate) + ADP + H(+). With respect to regulation, repressed by PtdIns4P, adenosine and wortmannin, but stimulated by other negatively charged lipids such as PtdIns3P, PtdOH, and phosphatidyl-serine (PtdSer). Functionally, acts on phosphatidylinositol (PtdIns) in the first committed step in the production of the second messenger inositol-1,4,5,-trisphosphate. Can bind to phosphatidylinositol 4-monophosphate (PI-4-P or PtdIns4P), phosphatidylinositol 4,5-bisphosphate (PI-4,5-P2 or PtdIns4,5P2), and phosphatidic acid (PtdOH), but not to 3-phosphoinositides. May function upstream of the cold response phosphoinositide-dependent phospholipase C (PI-PLC) pathway. This is Phosphatidylinositol 4-kinase alpha 1 from Arabidopsis thaliana (Mouse-ear cress).